The sequence spans 380 residues: MSTPRVMVGVSGGVDSSVAAWRLVQQGEAVAGLFMQNWADDGSGECRAEDDRRDAVAVCGLLGIPFHFRDFSNEYWQGVFEHFLAEYAAGRTPNPDVLCNREVKFKHFLDAARELGAERIATGHYARVAQRGHQWLLLRGADRSKDQSYFLHQLGQQQLAATLFPIGDLEKTDLRRIARDVSLPTHAKKDSTGICFIGERDFREFLGRYLPAKPGQILDPADGSVIAEHPGVFYFTLGQREGLNIGGVRGRPAAPWYVVGKDVASNVLYVDQDRDSTWMLSNRLRSETAHWIAGAPPARRFECTAQTRYRQPDEPCTVEVLDDGSVLVTFARPQRAVTPGQSLVLYDGDVCLGGAVIAATDAPLEQRLRTTPSPFEVIAA.

Residues Gly9 to Ser16 and Met35 each bind ATP. The tract at residues Asn94–Asp96 is interaction with target base in tRNA. The active-site Nucleophile is the Cys99. A disulfide bond links Cys99 and Cys195. Gly123 contributes to the ATP binding site. The tract at residues Lys145–Gln147 is interaction with tRNA. Catalysis depends on Cys195, which acts as the Cysteine persulfide intermediate. The segment at Arg308–Tyr309 is interaction with tRNA.

The protein belongs to the MnmA/TRMU family.

It is found in the cytoplasm. It catalyses the reaction S-sulfanyl-L-cysteinyl-[protein] + uridine(34) in tRNA + AH2 + ATP = 2-thiouridine(34) in tRNA + L-cysteinyl-[protein] + A + AMP + diphosphate + H(+). Its function is as follows. Catalyzes the 2-thiolation of uridine at the wobble position (U34) of tRNA, leading to the formation of s(2)U34. This is tRNA-specific 2-thiouridylase MnmA from Stenotrophomonas maltophilia (strain R551-3).